Consider the following 793-residue polypeptide: Pleckstrin homology domain-containing family H member 3 (793 aa).

The signal sequence occupies residues 1–18 (MPLPGGLWWLLCCRRGFT). The disordered stretch occupies residues 28-62 (ELSGDGDEDEDEETFELRTPSPAGGGRGPLEVTLT). A compositionally biased stretch (acidic residues) spans 29 to 41 (LSGDGDEDEDEET). The residue at position 30 (serine 30) is a Phosphoserine. A PH domain is found at 95 to 199 (DIVVKGWLYR…WGVALREVIA (105 aa)). The 163-residue stretch at 237–399 (HTSGALYAPL…PSLAEISALS (163 aa)) folds into the MyTH4 domain. Residues 404 to 754 (LLCTVHCPGA…AYLANPSPER (351 aa)) form the FERM domain. 2 disordered regions span residues 554–586 (VPLP…SAAL) and 598–622 (KRRA…EGGG). Basic residues predominate over residues 598-608 (KRRAERARRGG). Residues arginine 638 and arginine 642 each carry the omega-N-methylarginine modification. Positions 750-762 (PSPERPCSSSSPP) are enriched in low complexity. The segment at 750–793 (PSPERPCSSSSPPCQDLPDTSPPSQRPGLDEPQGQSGCLGQLQD) is disordered. Polar residues predominate over residues 782 to 793 (QGQSGCLGQLQD).

In Homo sapiens (Human), this protein is Pleckstrin homology domain-containing family H member 3 (PLEKHH3).